We begin with the raw amino-acid sequence, 104 residues long: Large ribosomal subunit protein bL21c (104 aa).

The protein belongs to the bacterial ribosomal protein bL21 family. As to quaternary structure, part of the 50S ribosomal subunit.

It is found in the plastid. It localises to the cyanelle. Functionally, this protein binds to 23S rRNA. This Cyanophora paradoxa protein is Large ribosomal subunit protein bL21c.